The primary structure comprises 390 residues: Phosphoglycerate kinase (390 aa).

Substrate is bound by residues 21–23 (DLN), R36, 59–62 (HLGR), R114, and R147. Residues K198, E314, and 340 to 343 (GGDT) contribute to the ATP site.

This sequence belongs to the phosphoglycerate kinase family. As to quaternary structure, monomer.

The protein localises to the cytoplasm. It catalyses the reaction (2R)-3-phosphoglycerate + ATP = (2R)-3-phospho-glyceroyl phosphate + ADP. It participates in carbohydrate degradation; glycolysis; pyruvate from D-glyceraldehyde 3-phosphate: step 2/5. This Buchnera aphidicola subsp. Acyrthosiphon pisum (strain 5A) protein is Phosphoglycerate kinase.